A 396-amino-acid chain; its full sequence is Elongation factor Tu 1 (396 aa).

The tr-type G domain maps to 10–206 (KLHVNVGTIG…ALDTFIPDPT (197 aa)). Positions 19–26 (GHVDHGKT) are G1. 19–26 (GHVDHGKT) contributes to the GTP binding site. Thr26 is a Mg(2+) binding site. Residues 60–64 (GITIS) are G2. Residues 81 to 84 (DCPG) are G3. GTP contacts are provided by residues 81 to 85 (DCPGH) and 136 to 139 (NKAD). The interval 136–139 (NKAD) is G4. The G5 stretch occupies residues 174 to 176 (SAR).

It belongs to the TRAFAC class translation factor GTPase superfamily. Classic translation factor GTPase family. EF-Tu/EF-1A subfamily. In terms of assembly, monomer.

Its subcellular location is the cytoplasm. The catalysed reaction is GTP + H2O = GDP + phosphate + H(+). Its function is as follows. GTP hydrolase that promotes the GTP-dependent binding of aminoacyl-tRNA to the A-site of ribosomes during protein biosynthesis. This Xanthomonas campestris pv. campestris (strain B100) protein is Elongation factor Tu 1.